A 361-amino-acid polypeptide reads, in one-letter code: Peptide chain release factor 1 (361 aa).

Position 237 is an N5-methylglutamine (glutamine 237). Positions 287–297 (KQQKEQSDTRK) are enriched in basic and acidic residues. The disordered stretch occupies residues 287–313 (KQQKEQSDTRKSLVGSGDRSERIRTYN).

This sequence belongs to the prokaryotic/mitochondrial release factor family. Post-translationally, methylated by PrmC. Methylation increases the termination efficiency of RF1.

It is found in the cytoplasm. Functionally, peptide chain release factor 1 directs the termination of translation in response to the peptide chain termination codons UAG and UAA. The protein is Peptide chain release factor 1 of Francisella tularensis subsp. novicida (strain U112).